We begin with the raw amino-acid sequence, 1035 residues long: Beta-galactosidase (1035 aa).

Asparagine 101 and aspartate 199 together coordinate substrate. Na(+) is bound at residue aspartate 199. Mg(2+)-binding residues include glutamate 415, histidine 417, and glutamate 460. Substrate contacts are provided by residues glutamate 460 and 540 to 543 (EYAH). The active-site Proton donor is the glutamate 460. Glutamate 540 acts as the Nucleophile in catalysis. Asparagine 600 is a binding site for Mg(2+). The Na(+) site is built by phenylalanine 604 and asparagine 607. Substrate contacts are provided by asparagine 607 and tryptophan 1011.

The protein belongs to the glycosyl hydrolase 2 family. In terms of assembly, homotetramer. It depends on Mg(2+) as a cofactor. Requires Na(+) as cofactor.

It carries out the reaction Hydrolysis of terminal non-reducing beta-D-galactose residues in beta-D-galactosides.. The sequence is that of Beta-galactosidase from Psychromonas ingrahamii (strain DSM 17664 / CCUG 51855 / 37).